We begin with the raw amino-acid sequence, 311 residues long: Methionyl-tRNA formyltransferase (311 aa).

110-113 provides a ligand contact to (6S)-5,6,7,8-tetrahydrofolate; the sequence is SLLP.

Belongs to the Fmt family.

It catalyses the reaction L-methionyl-tRNA(fMet) + (6R)-10-formyltetrahydrofolate = N-formyl-L-methionyl-tRNA(fMet) + (6S)-5,6,7,8-tetrahydrofolate + H(+). Attaches a formyl group to the free amino group of methionyl-tRNA(fMet). The formyl group appears to play a dual role in the initiator identity of N-formylmethionyl-tRNA by promoting its recognition by IF2 and preventing the misappropriation of this tRNA by the elongation apparatus. This is Methionyl-tRNA formyltransferase from Sulfurihydrogenibium sp. (strain YO3AOP1).